Reading from the N-terminus, the 266-residue chain is Tryptophan synthase alpha chain (266 aa).

Catalysis depends on proton acceptor residues E51 and D62.

Belongs to the TrpA family. Tetramer of two alpha and two beta chains.

The enzyme catalyses (1S,2R)-1-C-(indol-3-yl)glycerol 3-phosphate + L-serine = D-glyceraldehyde 3-phosphate + L-tryptophan + H2O. The protein operates within amino-acid biosynthesis; L-tryptophan biosynthesis; L-tryptophan from chorismate: step 5/5. Its function is as follows. The alpha subunit is responsible for the aldol cleavage of indoleglycerol phosphate to indole and glyceraldehyde 3-phosphate. The sequence is that of Tryptophan synthase alpha chain from Thermosynechococcus vestitus (strain NIES-2133 / IAM M-273 / BP-1).